Here is a 475-residue protein sequence, read N- to C-terminus: Ribulose bisphosphate carboxylase large chain (475 aa).

Positions 1–2 (MS) are excised as a propeptide. P3 is modified (N-acetylproline). K14 is modified (N6,N6,N6-trimethyllysine). Substrate is bound by residues N123 and T173. K175 acts as the Proton acceptor in catalysis. K177 contacts substrate. Residues K201, D203, and E204 each contribute to the Mg(2+) site. At K201 the chain carries N6-carboxylysine. The active-site Proton acceptor is the H294. Residues R295, H327, and S379 each coordinate substrate.

This sequence belongs to the RuBisCO large chain family. Type I subfamily. As to quaternary structure, heterohexadecamer of 8 large chains and 8 small chains; disulfide-linked. The disulfide link is formed within the large subunit homodimers. It depends on Mg(2+) as a cofactor. Post-translationally, the disulfide bond which can form in the large chain dimeric partners within the hexadecamer appears to be associated with oxidative stress and protein turnover.

It is found in the plastid. Its subcellular location is the chloroplast. The catalysed reaction is 2 (2R)-3-phosphoglycerate + 2 H(+) = D-ribulose 1,5-bisphosphate + CO2 + H2O. The enzyme catalyses D-ribulose 1,5-bisphosphate + O2 = 2-phosphoglycolate + (2R)-3-phosphoglycerate + 2 H(+). RuBisCO catalyzes two reactions: the carboxylation of D-ribulose 1,5-bisphosphate, the primary event in carbon dioxide fixation, as well as the oxidative fragmentation of the pentose substrate in the photorespiration process. Both reactions occur simultaneously and in competition at the same active site. The chain is Ribulose bisphosphate carboxylase large chain from Pinus longaeva (Great Basin bristlecone pine).